Consider the following 270-residue polypeptide: Formamidopyrimidine-DNA glycosylase (270 aa).

The active-site Schiff-base intermediate with DNA is the Pro-2. Catalysis depends on Glu-3, which acts as the Proton donor. Lys-58 serves as the catalytic Proton donor; for beta-elimination activity. DNA-binding residues include His-92, Arg-111, and Arg-153. The segment at 238 to 270 adopts an FPG-type zinc-finger fold; that stretch reads SVYGASVCPVCGGALRQIRLAQRGTWFCPRCQR. The Proton donor; for delta-elimination activity role is filled by Arg-260.

Belongs to the FPG family. Monomer. The cofactor is Zn(2+).

The catalysed reaction is Hydrolysis of DNA containing ring-opened 7-methylguanine residues, releasing 2,6-diamino-4-hydroxy-5-(N-methyl)formamidopyrimidine.. It catalyses the reaction 2'-deoxyribonucleotide-(2'-deoxyribose 5'-phosphate)-2'-deoxyribonucleotide-DNA = a 3'-end 2'-deoxyribonucleotide-(2,3-dehydro-2,3-deoxyribose 5'-phosphate)-DNA + a 5'-end 5'-phospho-2'-deoxyribonucleoside-DNA + H(+). Its function is as follows. Involved in base excision repair of DNA damaged by oxidation or by mutagenic agents. Acts as a DNA glycosylase that recognizes and removes damaged bases. Has a preference for oxidized purines, such as 7,8-dihydro-8-oxoguanine (8-oxoG). Has AP (apurinic/apyrimidinic) lyase activity and introduces nicks in the DNA strand. Cleaves the DNA backbone by beta-delta elimination to generate a single-strand break at the site of the removed base with both 3'- and 5'-phosphates. The chain is Formamidopyrimidine-DNA glycosylase from Halorhodospira halophila (strain DSM 244 / SL1) (Ectothiorhodospira halophila (strain DSM 244 / SL1)).